A 243-amino-acid chain; its full sequence is MGAAASIQTTVTTINKKISEKLEQTASASATANCDINIGNIIFKKNKGCNVLVKNMCSANASAQLDAIVSAVREVYDQLTEQQKAYAPSLLTAALNIQTNVSTITQDFETYIKQKCNSDAVINNIINVQSLEVDECSAPPGQIMTFEFINTGTATGNCAMKSVLDVLTKSSDRVSGNQSTGNDFSKYLYIIGGIICFLILLYYAKKLFFMSTNDKVKVLLAKKPDVHWTTYIDTYFRSSPVLV.

Gly-2 carries N-myristoyl glycine; by host lipidation. A targeting to MV membrane region spans residues 2 to 12 (GAAASIQTTVT). The Virion surface segment spans residues 2 to 183 (GAAASIQTTV…VSGNQSTGND (182 aa)). Cystine bridges form between Cys-34–Cys-57, Cys-49–Cys-136, and Cys-116–Cys-158. The helical transmembrane segment at 184 to 204 (FSKYLYIIGGIICFLILLYYA) threads the bilayer. At 205–243 (KKLFFMSTNDKVKVLLAKKPDVHWTTYIDTYFRSSPVLV) the chain is on the intravirion side.

This sequence belongs to the orthopoxvirus OPG095 family. As to quaternary structure, component of the entry fusion complex (EFC) composed of OPG053, OPG076, OPG086, OPG094, OPG095, OPG099, OPG107, OPG143, OPG104, OPG147 and OPG155. Except for OPG095 and OPG053, each of the EFC proteins is required for assembly or stability of the complex. In terms of processing, myristoylated. Post-translationally, disulfid bonds are oxidized in the cytoplasm by OPG088 protein. Unglycosylated because produced in viral factories instead of the classic ER -Golgi route.

It localises to the virion membrane. Functionally, component of the entry fusion complex (EFC), which consists of 11 proteins. During cell infection, this complex mediates entry of the virion core into the host cytoplasm by a two-step mechanism consisting of lipid mixing of the viral and cellular membranes and subsequent pore formation. This is Entry-fusion complex associated protein OPG095 (OPG099) from Vertebrata (FPV).